Here is a 275-residue protein sequence, read N- to C-terminus: Ribosomal RNA small subunit methyltransferase A (275 aa).

Asn21, Leu23, Gly48, Glu69, Asp94, and Asn115 together coordinate S-adenosyl-L-methionine.

It belongs to the class I-like SAM-binding methyltransferase superfamily. rRNA adenine N(6)-methyltransferase family. RsmA subfamily.

The protein localises to the cytoplasm. It carries out the reaction adenosine(1518)/adenosine(1519) in 16S rRNA + 4 S-adenosyl-L-methionine = N(6)-dimethyladenosine(1518)/N(6)-dimethyladenosine(1519) in 16S rRNA + 4 S-adenosyl-L-homocysteine + 4 H(+). Functionally, specifically dimethylates two adjacent adenosines (A1518 and A1519) in the loop of a conserved hairpin near the 3'-end of 16S rRNA in the 30S particle. May play a critical role in biogenesis of 30S subunits. The chain is Ribosomal RNA small subunit methyltransferase A from Clostridium botulinum (strain ATCC 19397 / Type A).